Consider the following 564-residue polypeptide: Septin-9 (564 aa).

M1 carries the N-acetylmethionine modification. Phosphoserine is present on S12. Phosphothreonine is present on residues T24 and T31. Disordered regions lie at residues 38–165 (VASS…PVTD) and 178–224 (PAEA…DSEV). K44 is subject to N6-acetyllysine. S64, S67, and S71 each carry phosphoserine. The segment covering 95-109 (DISSKQVESTASTPG) has biased composition (polar residues). A compositionally biased stretch (basic and acidic residues) spans 116–134 (KRAEVLGHKTPEPVPRRTE). T125 carries the phosphothreonine modification. Residues 190–203 (TLENSEAPMSQLQS) show a composition bias toward polar residues. Y258 is subject to Phosphotyrosine. A Septin-type G domain is found at 275-546 (QGFEFNIMVV…EAYRVKRLNE (272 aa)). Residues 285 to 292 (GQSGLGKS) are G1 motif. Position 285 to 292 (285 to 292 (GQSGLGKS)) interacts with GTP. 2 positions are modified to phosphoserine: S307 and S312. GTP is bound by residues T319, G345, 425–433 (KADTLTLEE), G480, and R495. The G3 motif stretch occupies residues 342 to 345 (DTPG). The interval 424–427 (AKAD) is G4 motif.

The protein belongs to the TRAFAC class TrmE-Era-EngA-EngB-Septin-like GTPase superfamily. Septin GTPase family. Septins polymerize into heterooligomeric protein complexes that form filaments, and associate with cellular membranes, actin filaments, and microtubules. GTPase activity is required for filament formation. Interacts with SEPTIN2, SEPTIN6, SEPTIN7, SEPTIN11 and SEPTIN14. Interacts with RTKN and ARHGEF18. Expressed in the brain, mainly in the perikarya and processes of astrocytes in the cerebellum, dentate gyrus and corpus callosum (at protein level). In the sciatic nerve, highly expressed in Schwann cells (at protein level). Isoforms are differentially expressed in testes, kidney, liver, heart, spleen and brain. Undetectable in skeletal muscle.

It is found in the cytoplasm. Its subcellular location is the cytoskeleton. Its function is as follows. Filament-forming cytoskeletal GTPase. May play a role in cytokinesis (Potential). This Rattus norvegicus (Rat) protein is Septin-9.